The primary structure comprises 71 residues: Brevinin-1V (71 aa).

Residues 1 to 22 (MFTLKKSLLLLFFLGTINLSLC) form the signal peptide. A propeptide spanning residues 23-45 (EQERDADEEERRDDSEERDIEVE) is cleaved from the precursor. C65 and C71 are disulfide-bonded.

The protein belongs to the frog skin active peptide (FSAP) family. Brevinin subfamily. As to expression, expressed by the skin glands.

It localises to the secreted. Has antimicrobial activity against Gram-positive bacteria and fungi but has weak or no activity against a range of Gram-negative bacteria except P.faecalis. Active against the Gram-positive bacteria E.faecium 091299 (MIC=37.5 uM), S.aureus ATCC 25923 (MIC=2.4 uM), S.carnosus KHS (MIC=19 uM), B.licheniformis X39 (MIC=2.4 uM) and R.rhodochrous X15 (MIC=1.2 uM) and a lower activity against E.faecalis 981 (MIC=75 uM). Active against the Gram-negative bacterium P.faecalis X29 (MIC=9.5 uM) is virtually inactive against E.coli ATCC 25922 (MIC=150 uM), and inactive against P.aeruginosa and S.typhi. Has antifungal activity against C.albicans ATCC 2002 (MIC=9.5 uM) and is also active against the slime mold 090223 (MIC=1.2 uM). Has low hemolytic activity against human erythrocytes (LC(50)=75 uM). In Odorrana hainanensis (Odor frog), this protein is Brevinin-1V.